A 312-amino-acid chain; its full sequence is Olfactory receptor 10P22 (312 aa).

The Extracellular portion of the chain corresponds to 1–26; sequence MGDDNDTDITEFILLGFSGYGFLQGH. Asparagine 5 carries an N-linked (GlcNAc...) asparagine glycan. Residues 27–47 traverse the membrane as a helical segment; it reads LFWGVLCIYVVTLLGNSLIVL. Topologically, residues 48-57 are cytoplasmic; that stretch reads LTLADSALHS. The helical transmembrane segment at 58–78 threads the bilayer; it reads PMYFFLRHFSVVEILYTTTIV. The Extracellular segment spans residues 79-89; sequence PRMLADLRSSC. The helical transmembrane segment at 90-110 threads the bilayer; it reads PTIPLASCFTQLYFFALFGIA. Residues 111–143 are Cytoplasmic-facing; the sequence is ECCLLTAMAYDRYAAICCPLHYTTLMSQGTYTG. Residues 144-164 form a helical membrane-spanning segment; sequence LVGASYLAGVISGTTHSIFIF. At 165–205 the chain is on the extracellular side; that stretch reads TLPFRGAKTIHHFLCDILPVLRLATASTFWGEVGNLFVTIT. The chain crosses the membrane as a helical span at residues 206–226; the sequence is FIFVPFLLIVASYACILVTIL. At 227–236 the chain is on the cytoplasmic side; it reads GVATSQGRQK. A helical transmembrane segment spans residues 237–257; it reads LFSTCSSHLFVVILFFGTATV. Over 258 to 271 the chain is Extracellular; sequence AYMRPQADSFGNTD. A helical transmembrane segment spans residues 272–292; that stretch reads QILTLVYTVVTPMCNPFVYSL. Topologically, residues 293-312 are cytoplasmic; the sequence is RNKEVTGAMRRLMKRYLWGP.

This sequence belongs to the G-protein coupled receptor 1 family.

Its subcellular location is the cell membrane. Odorant receptor. The chain is Olfactory receptor 10P22 from Mus musculus (Mouse).